Consider the following 594-residue polypeptide: MRTNYCGQLNSAHVGQKVTLCGWVNRRRDLGGLIFIDMRDREGIVQVFFDPEQKEAFSQASELRNEFCIQVTGTVRARPDSQVNKNMATGEIELAAESLSIFNRSEALPLDSNQTNTEERRLTYRYLDLRRPEMSQRLKTRAKITSFVRRFMDGEGFLDVETPMLTKATPEGARDYLVPSRVHKGKFYALPQSPQLFKQLLMMSGFDRYYQIVKCFRDEDLRADRQPEFTQIDVETSFMTAEQVREVMERMIHALWLDILNVDLGAFPVMTFAEAMRRYGSDKPDLRNPMELIDIADLVKNVEFSVFAQAANDEKCRVIALRVPGGASLTRKNIDEYTQFVSIYGAKGLAWMKVNEKAKGIEGVQSPIAKFLTNDVVNSILAATNATDGDLIFFGAGRQGTMSDAMGALRLKVGRDLELTDLNAWKPLWVIDFPMFEEDEDTGSLSAMHHPFTSPKDLTPAELTAHPVGAVANAYDMVINGYEVGGGSVRIHRNEMQQAVFSILGITPDEQREKFGFLLDALKFGTPPHAGLAFGLDRLVMLLTGTDNIRDVIAFPKTTAAACLMTNAPSFANEDALKELAIQVTEKEVSTDNE.

Position 171 (Glu-171) interacts with L-aspartate. The aspartate stretch occupies residues 195-198 (QLFK). Position 217 (Arg-217) interacts with L-aspartate. ATP contacts are provided by residues 217-219 (RDE) and Gln-226. His-449 is a binding site for L-aspartate. Residue Glu-483 participates in ATP binding. L-aspartate is bound at residue Arg-490. 535–538 (GLDR) lines the ATP pocket.

This sequence belongs to the class-II aminoacyl-tRNA synthetase family. Type 1 subfamily. Homodimer.

Its subcellular location is the cytoplasm. It carries out the reaction tRNA(Asp) + L-aspartate + ATP = L-aspartyl-tRNA(Asp) + AMP + diphosphate. In terms of biological role, catalyzes the attachment of L-aspartate to tRNA(Asp) in a two-step reaction: L-aspartate is first activated by ATP to form Asp-AMP and then transferred to the acceptor end of tRNA(Asp). The protein is Aspartate--tRNA ligase of Proteus mirabilis (strain HI4320).